We begin with the raw amino-acid sequence, 192 residues long: DNA dC-&gt;dU-editing enzyme APOBEC-3Ca (192 aa).

In terms of domain architecture, CMP/dCMP-type deaminase spans 15-141 (IDPNTFRFHF…PNYQEGLCKL (127 aa)). Residue histidine 69 coordinates Zn(2+). Glutamate 71 functions as the Proton donor in the catalytic mechanism. 2 residues coordinate Zn(2+): cysteine 100 and cysteine 103.

This sequence belongs to the cytidine and deoxycytidylate deaminase family. In terms of assembly, (Microbial infection) Interacts with feline foamy virus protein Bet. This interaction does not induce APOBEC3Ca degradation but prevents its dimerization and incorporation into the virion. The cofactor is Zn(2+).

Its subcellular location is the nucleus. The protein localises to the cytoplasm. The catalysed reaction is a 2'-deoxycytidine in single-stranded DNA + H2O + H(+) = a 2'-deoxyuridine in single-stranded DNA + NH4(+). In terms of biological role, DNA deaminase (cytidine deaminase) which acts as an inhibitor of retrovirus replication and retrotransposon mobility via deaminase-dependent and -independent mechanisms. Selectively targets single-stranded DNA and does not deaminate double-stranded DNA or single- or double-stranded RNA. Does not reduce infectivity of foamy feline virus, feline immunodeficiency virus or feline leukemia virus. In Felis catus (Cat), this protein is DNA dC-&gt;dU-editing enzyme APOBEC-3Ca.